Reading from the N-terminus, the 66-residue chain is Large ribosomal subunit protein uL29 (66 aa).

Belongs to the universal ribosomal protein uL29 family.

The polypeptide is Large ribosomal subunit protein uL29 (Thermosipho melanesiensis (strain DSM 12029 / CIP 104789 / BI429)).